Consider the following 261-residue polypeptide: Ribosomal RNA small subunit methyltransferase J (261 aa).

Residues 109 to 110, 125 to 126, and Asp179 each bind S-adenosyl-L-methionine; these read RD and ER.

The protein belongs to the methyltransferase superfamily. RsmJ family.

It is found in the cytoplasm. It catalyses the reaction guanosine(1516) in 16S rRNA + S-adenosyl-L-methionine = N(2)-methylguanosine(1516) in 16S rRNA + S-adenosyl-L-homocysteine + H(+). Functionally, specifically methylates the guanosine in position 1516 of 16S rRNA. The polypeptide is Ribosomal RNA small subunit methyltransferase J (Pseudomonas aeruginosa (strain UCBPP-PA14)).